The chain runs to 275 residues: Tryptase (275 aa).

An N-terminal signal peptide occupies residues 1-20 (MLNLLVLALPLLVSLVHTAP). Residues 21-30 (APGQALERAG) constitute a propeptide, activation peptide. In terms of domain architecture, Peptidase S1 spans 31–272 (IVGGKEAPGH…YLDWIHQCIP (242 aa)). Cys59 and Cys75 are disulfide-bonded. Active-site charge relay system residues include His74 and Asp121. N-linked (GlcNAc...) asparagine glycosylation occurs at Asn132. Disulfide bonds link Cys155–Cys230, Cys188–Cys211, and Cys220–Cys248. Ser224 (charge relay system) is an active-site residue. Asn233 carries an N-linked (GlcNAc...) asparagine glycan.

Belongs to the peptidase S1 family. Tryptase subfamily. As to quaternary structure, homotetramer.

It localises to the secreted. It catalyses the reaction Preferential cleavage: Arg-|-Xaa, Lys-|-Xaa, but with more restricted specificity than trypsin.. Tryptase is the major neutral protease present in mast cells and is secreted upon the coupled activation-degranulation response of this cell type. The protein is Tryptase (MCT7) of Sus scrofa (Pig).